Consider the following 360-residue polypeptide: Phospho-N-acetylmuramoyl-pentapeptide-transferase (360 aa).

The next 10 helical transmembrane spans lie at 18–38 (VFSYLTLRAILGILTALMMSL), 73–93 (TMGGLLILAAIFTSTLLWADL), 97–117 (YVWATLFVIGSLGVVGFVDDY), 135–155 (FWQSVIALVVACALFFTSTQA), 168–188 (VLPQLGLFYIVITYFALVGTS), 199–219 (GLAIVPTILVAAALAIIAYLT), 236–256 (ASELVVVCTAIVGAGLGFLWF), 263–283 (VFMGDVGSLALGGALGIIAVL), 288–308 (LLLIIMGGVFVMEALSVILQV), and 339–359 (IVRFWIISIVLVLAGLATLKI).

It belongs to the glycosyltransferase 4 family. MraY subfamily. Requires Mg(2+) as cofactor.

It localises to the cell inner membrane. It carries out the reaction UDP-N-acetyl-alpha-D-muramoyl-L-alanyl-gamma-D-glutamyl-meso-2,6-diaminopimeloyl-D-alanyl-D-alanine + di-trans,octa-cis-undecaprenyl phosphate = di-trans,octa-cis-undecaprenyl diphospho-N-acetyl-alpha-D-muramoyl-L-alanyl-D-glutamyl-meso-2,6-diaminopimeloyl-D-alanyl-D-alanine + UMP. The protein operates within cell wall biogenesis; peptidoglycan biosynthesis. In terms of biological role, catalyzes the initial step of the lipid cycle reactions in the biosynthesis of the cell wall peptidoglycan: transfers peptidoglycan precursor phospho-MurNAc-pentapeptide from UDP-MurNAc-pentapeptide onto the lipid carrier undecaprenyl phosphate, yielding undecaprenyl-pyrophosphoryl-MurNAc-pentapeptide, known as lipid I. In Pseudoalteromonas translucida (strain TAC 125), this protein is Phospho-N-acetylmuramoyl-pentapeptide-transferase.